Reading from the N-terminus, the 464-residue chain is Protein ABHD18 (464 aa).

The N-terminal stretch at 1–24 is a signal peptide; the sequence is MGVSKLDILYRRLLLTKLFIRGWG. N341 is a glycosylation site (N-linked (GlcNAc...) asparagine).

It belongs to the AB hydrolase superfamily.

It is found in the secreted. The chain is Protein ABHD18 from Rattus norvegicus (Rat).